Here is a 493-residue protein sequence, read N- to C-terminus: Amidophosphoribosyltransferase (493 aa).

The propeptide occupies 1 to 26; it reads MIPTQPLTADLDCDLGLERPDRPEEA. Residue Cys-27 is the Nucleophile of the active site. The Glutamine amidotransferase type-2 domain maps to 27–252; the sequence is CGVFALYAPG…PGEMVRITDA (226 aa). [4Fe-4S] cluster is bound at residue Cys-268. Residues Ser-315, Asp-377, and Asp-378 each coordinate Mg(2+). Residues Cys-414, Cys-465, and Cys-468 each coordinate [4Fe-4S] cluster.

In the C-terminal section; belongs to the purine/pyrimidine phosphoribosyltransferase family. The cofactor is Mg(2+). It depends on [4Fe-4S] cluster as a cofactor.

The catalysed reaction is 5-phospho-beta-D-ribosylamine + L-glutamate + diphosphate = 5-phospho-alpha-D-ribose 1-diphosphate + L-glutamine + H2O. It participates in purine metabolism; IMP biosynthesis via de novo pathway; N(1)-(5-phospho-D-ribosyl)glycinamide from 5-phospho-alpha-D-ribose 1-diphosphate: step 1/2. Functionally, catalyzes the formation of phosphoribosylamine from phosphoribosylpyrophosphate (PRPP) and glutamine. The polypeptide is Amidophosphoribosyltransferase (Synechococcus elongatus (strain ATCC 33912 / PCC 7942 / FACHB-805) (Anacystis nidulans R2)).